The following is a 72-amino-acid chain: NAD(P)H-quinone oxidoreductase subunit O (72 aa).

Belongs to the complex I NdhO subunit family. As to quaternary structure, NDH-1 can be composed of about 15 different subunits; different subcomplexes with different compositions have been identified which probably have different functions.

The protein localises to the cellular thylakoid membrane. The enzyme catalyses a plastoquinone + NADH + (n+1) H(+)(in) = a plastoquinol + NAD(+) + n H(+)(out). It carries out the reaction a plastoquinone + NADPH + (n+1) H(+)(in) = a plastoquinol + NADP(+) + n H(+)(out). Functionally, NDH-1 shuttles electrons from an unknown electron donor, via FMN and iron-sulfur (Fe-S) centers, to quinones in the respiratory and/or the photosynthetic chain. The immediate electron acceptor for the enzyme in this species is believed to be plastoquinone. Couples the redox reaction to proton translocation, and thus conserves the redox energy in a proton gradient. Cyanobacterial NDH-1 also plays a role in inorganic carbon-concentration. This Rippkaea orientalis (strain PCC 8801 / RF-1) (Cyanothece sp. (strain PCC 8801)) protein is NAD(P)H-quinone oxidoreductase subunit O.